The chain runs to 224 residues: UPF0441 protein ECA0329 (224 aa).

Positions 180 to 224 are disordered; the sequence is TALAPKPATTSTITRGGFGETVAKQNSMQRSSASSNSSSSRSMGG. The segment covering 204–224 has biased composition (low complexity); the sequence is QNSMQRSSASSNSSSSRSMGG.

This sequence belongs to the UPF0441 family.

This chain is UPF0441 protein ECA0329, found in Pectobacterium atrosepticum (strain SCRI 1043 / ATCC BAA-672) (Erwinia carotovora subsp. atroseptica).